The sequence spans 63 residues: ATP synthase F(0) complex subunit 8 (63 aa).

A helical membrane pass occupies residues 8-24 (TWLLTILSMLLTLFVLF). N6-acetyllysine is present on K57.

Belongs to the ATPase protein 8 family. In terms of assembly, component of the ATP synthase complex composed at least of ATP5F1A/subunit alpha, ATP5F1B/subunit beta, ATP5MC1/subunit c (homooctomer), MT-ATP6/subunit a, MT-ATP8/subunit 8, ATP5ME/subunit e, ATP5MF/subunit f, ATP5MG/subunit g, ATP5MK/subunit k, ATP5MJ/subunit j, ATP5F1C/subunit gamma, ATP5F1D/subunit delta, ATP5F1E/subunit epsilon, ATP5PF/subunit F6, ATP5PB/subunit b, ATP5PD/subunit d, ATP5PO/subunit OSCP. ATP synthase complex consists of a soluble F(1) head domain (subunits alpha(3) and beta(3)) - the catalytic core - and a membrane F(0) domain - the membrane proton channel (subunits c, a, 8, e, f, g, k and j). These two domains are linked by a central stalk (subunits gamma, delta, and epsilon) rotating inside the F1 region and a stationary peripheral stalk (subunits F6, b, d, and OSCP). Interacts with PRICKLE3.

It localises to the mitochondrion membrane. Subunit 8, of the mitochondrial membrane ATP synthase complex (F(1)F(0) ATP synthase or Complex V) that produces ATP from ADP in the presence of a proton gradient across the membrane which is generated by electron transport complexes of the respiratory chain. ATP synthase complex consist of a soluble F(1) head domain - the catalytic core - and a membrane F(1) domain - the membrane proton channel. These two domains are linked by a central stalk rotating inside the F(1) region and a stationary peripheral stalk. During catalysis, ATP synthesis in the catalytic domain of F(1) is coupled via a rotary mechanism of the central stalk subunits to proton translocation. In vivo, can only synthesize ATP although its ATP hydrolase activity can be activated artificially in vitro. Part of the complex F(0) domain. The protein is ATP synthase F(0) complex subunit 8 of Balaenoptera musculus (Blue whale).